We begin with the raw amino-acid sequence, 292 residues long: 11-beta-hydroxysteroid dehydrogenase 1 (292 aa).

The Cytoplasmic portion of the chain corresponds to 1–7 (MAFMKKY). The chain crosses the membrane as a helical; Signal-anchor for type II membrane protein span at residues 8-24 (LLPILGIFLAYYYYSAN). The Lumenal segment spans residues 25–292 (EEFRPEMLRG…KYNMERFINN (268 aa)). Residues 41–67 (GASK…TARS) and 92–93 (TM) contribute to the NADP(+) site. The N-linked (GlcNAc...) asparagine glycan is linked to asparagine 95. Residue 119-121 (NHI) participates in NADP(+) binding. Serine 170 provides a ligand contact to substrate. Tyrosine 183 acts as the Proton acceptor in catalysis. 183 to 187 (YSASK) is a binding site for NADP(+). An N-linked (GlcNAc...) asparagine glycan is attached at asparagine 207. NADP(+) contacts are provided by residues 216 to 222 (GLIDTDT) and 218 to 222 (IDTDT).

It belongs to the short-chain dehydrogenases/reductases (SDR) family. In terms of assembly, homodimer. As to expression, liver, kidney, lung, hypothalamus, anterior pituitary and placenta.

It localises to the endoplasmic reticulum membrane. The catalysed reaction is an 11beta-hydroxysteroid + NADP(+) = an 11-oxosteroid + NADPH + H(+). It carries out the reaction corticosterone + NADP(+) = 11-dehydrocorticosterone + NADPH + H(+). It catalyses the reaction cortisone + NADPH + H(+) = cortisol + NADP(+). The enzyme catalyses a 7beta-hydroxysteroid + NADP(+) = a 7-oxosteroid + NADPH + H(+). The catalysed reaction is 7-oxocholesterol + NADPH + H(+) = 7beta-hydroxycholesterol + NADP(+). It carries out the reaction chenodeoxycholate + NADP(+) = 7-oxolithocholate + NADPH + H(+). It catalyses the reaction 7-oxolithocholate + NADPH + H(+) = ursodeoxycholate + NADP(+). The enzyme catalyses glycochenodeoxycholate + NADP(+) = 7-oxoglycolithocholate + NADPH + H(+). The catalysed reaction is taurochenodeoxycholate + NADP(+) = 7-oxotaurolithocholate + NADPH + H(+). It carries out the reaction tauroursodeoxycholate + NADP(+) = 7-oxotaurolithocholate + NADPH + H(+). It catalyses the reaction glycoursodeoxycholate + NADP(+) = 7-oxoglycolithocholate + NADPH + H(+). The enzyme catalyses 7-oxopregnenolone + NADPH + H(+) = 7beta-hydroxypregnenolone + NADP(+). The catalysed reaction is 3beta,7alpha-dihydroxyandrost-5-en-17-one + NADP(+) = 3beta-hydroxy-5-androstene-7,17-dione + NADPH + H(+). It carries out the reaction 3beta-hydroxy-5-androstene-7,17-dione + NADPH + H(+) = 3beta,7beta-dihydroxyandrost-5-en-17-one + NADP(+). It catalyses the reaction 3beta-hydroxy-5alpha-androstane-7,17-dione + NADPH + H(+) = 3beta,7beta-dihydroxy-5alpha-androstan-17-one + NADP(+). Controls the reversible conversion of biologically active glucocorticoids such as cortisone to cortisol, and 11-dehydrocorticosterone to corticosterone in the presence of NADP(H). Participates in the corticosteroid receptor-mediated anti-inflammatory response, as well as metabolic and homeostatic processes. Plays a role in the secretion of aqueous humor in the eye, maintaining a normotensive, intraocular environment. Bidirectional in vitro, predominantly functions as a reductase in vivo, thereby increasing the concentration of active glucocorticoids. It has broad substrate specificity, besides glucocorticoids, it accepts other steroid and sterol substrates. Interconverts 7-oxo- and 7-hydroxy-neurosteroids such as 7-oxopregnenolone and 7beta-hydroxypregnenolone, 7-oxodehydroepiandrosterone (3beta-hydroxy-5-androstene-7,17-dione) and 7beta-hydroxydehydroepiandrosterone (3beta,7beta-dihydroxyandrost-5-en-17-one), among others. Catalyzes the stereo-specific conversion of the major dietary oxysterol, 7-ketocholesterol (7-oxocholesterol), into the more polar 7-beta-hydroxycholesterol metabolite. 7-oxocholesterol is one of the most important oxysterols, it participates in several events such as induction of apoptosis, accumulation in atherosclerotic lesions, lipid peroxidation, and induction of foam cell formation. Mediates the 7-oxo reduction of 7-oxolithocholate mainly to chenodeoxycholate, and to a lesser extent to ursodeoxycholate, both in its free form and when conjugated to glycine or taurine, providing a link between glucocorticoid activation and bile acid metabolism. Catalyzes the synthesis of 7-beta-25-dihydroxycholesterol from 7-oxo-25-hydroxycholesterol in vitro, which acts as a ligand for the G-protein-coupled receptor (GPCR) Epstein-Barr virus-induced gene 2 (EBI2) and may thereby regulate immune cell migration. This is 11-beta-hydroxysteroid dehydrogenase 1 (HSD11B1) from Ovis aries (Sheep).